The sequence spans 307 residues: tRNA dimethylallyltransferase (307 aa).

16–23 (GCTAVGKT) provides a ligand contact to ATP. 18–23 (TAVGKT) is a binding site for substrate. The tract at residues 41–44 (DSLL) is interaction with substrate tRNA.

This sequence belongs to the IPP transferase family. In terms of assembly, monomer. Mg(2+) serves as cofactor.

It catalyses the reaction adenosine(37) in tRNA + dimethylallyl diphosphate = N(6)-dimethylallyladenosine(37) in tRNA + diphosphate. Catalyzes the transfer of a dimethylallyl group onto the adenine at position 37 in tRNAs that read codons beginning with uridine, leading to the formation of N6-(dimethylallyl)adenosine (i(6)A). The polypeptide is tRNA dimethylallyltransferase (Opitutus terrae (strain DSM 11246 / JCM 15787 / PB90-1)).